Here is a 627-residue protein sequence, read N- to C-terminus: 1-deoxy-D-xylulose-5-phosphate synthase (627 aa).

Residues H87 and 128–130 (GHS) each bind thiamine diphosphate. Mg(2+) is bound at residue D159. Thiamine diphosphate-binding positions include 160 to 161 (GA), N188, F295, and E375. N188 contacts Mg(2+).

This sequence belongs to the transketolase family. DXPS subfamily. As to quaternary structure, homodimer. It depends on Mg(2+) as a cofactor. Thiamine diphosphate serves as cofactor.

It catalyses the reaction D-glyceraldehyde 3-phosphate + pyruvate + H(+) = 1-deoxy-D-xylulose 5-phosphate + CO2. It participates in metabolic intermediate biosynthesis; 1-deoxy-D-xylulose 5-phosphate biosynthesis; 1-deoxy-D-xylulose 5-phosphate from D-glyceraldehyde 3-phosphate and pyruvate: step 1/1. In terms of biological role, catalyzes the acyloin condensation reaction between C atoms 2 and 3 of pyruvate and glyceraldehyde 3-phosphate to yield 1-deoxy-D-xylulose-5-phosphate (DXP). The protein is 1-deoxy-D-xylulose-5-phosphate synthase of Pseudomonas paraeruginosa (strain DSM 24068 / PA7) (Pseudomonas aeruginosa (strain PA7)).